Consider the following 290-residue polypeptide: Carbonic anhydrase-related protein (290 aa).

The segment at 1 to 26 (MADLSFIEDTVAFPEKEEDEEEEEEG) is disordered. At serine 5 the chain carries Phosphoserine. The span at 16 to 26 (KEEDEEEEEEG) shows a compositional bias: acidic residues. The Alpha-carbonic anhydrase domain occupies 27 to 289 (VEWGYEEGVE…LSDRVIRAAF (263 aa)). The active-site Proton donor/acceptor is histidine 87. Zn(2+) contacts are provided by histidine 118 and histidine 141.

The protein belongs to the alpha-carbonic anhydrase family.

Functionally, does not have a carbonic anhydrase catalytic activity. The protein is Carbonic anhydrase-related protein (CA8) of Homo sapiens (Human).